Reading from the N-terminus, the 295-residue chain is Pyridoxal 5'-phosphate synthase subunit PdxS (295 aa).

D-ribose 5-phosphate is bound at residue Asp25. Catalysis depends on Lys82, which acts as the Schiff-base intermediate with D-ribose 5-phosphate. Gly154 provides a ligand contact to D-ribose 5-phosphate. Arg166 contacts D-glyceraldehyde 3-phosphate. Residues Gly215 and Gly236–Ser237 contribute to the D-ribose 5-phosphate site.

It belongs to the PdxS/SNZ family. In terms of assembly, in the presence of PdxT, forms a dodecamer of heterodimers.

It catalyses the reaction aldehydo-D-ribose 5-phosphate + D-glyceraldehyde 3-phosphate + L-glutamine = pyridoxal 5'-phosphate + L-glutamate + phosphate + 3 H2O + H(+). It functions in the pathway cofactor biosynthesis; pyridoxal 5'-phosphate biosynthesis. Catalyzes the formation of pyridoxal 5'-phosphate from ribose 5-phosphate (RBP), glyceraldehyde 3-phosphate (G3P) and ammonia. The ammonia is provided by the PdxT subunit. Can also use ribulose 5-phosphate and dihydroxyacetone phosphate as substrates, resulting from enzyme-catalyzed isomerization of RBP and G3P, respectively. This is Pyridoxal 5'-phosphate synthase subunit PdxS from Bacillus cereus (strain G9842).